Reading from the N-terminus, the 149-residue chain is VapC ribonuclease PF0355 (149 aa).

Positions 8–122 (TFDSLALIKM…ITDDSKRYEP (115 aa)) constitute a PINc domain. Mg(2+) contacts are provided by Asp-10 and Asp-98.

The protein belongs to the PINc/VapC protein family. The cofactor is Mg(2+).

Functionally, toxic component of a type II toxin-antitoxin (TA) system. An RNase. This Pyrococcus furiosus (strain ATCC 43587 / DSM 3638 / JCM 8422 / Vc1) protein is VapC ribonuclease PF0355.